Consider the following 230-residue polypeptide: Large ribosomal subunit protein uL1 (230 aa).

It belongs to the universal ribosomal protein uL1 family. In terms of assembly, part of the 50S ribosomal subunit.

In terms of biological role, binds directly to 23S rRNA. The L1 stalk is quite mobile in the ribosome, and is involved in E site tRNA release. Its function is as follows. Protein L1 is also a translational repressor protein, it controls the translation of the L11 operon by binding to its mRNA. The polypeptide is Large ribosomal subunit protein uL1 (Bifidobacterium longum subsp. infantis (strain ATCC 15697 / DSM 20088 / JCM 1222 / NCTC 11817 / S12)).